Here is a 691-residue protein sequence, read N- to C-terminus: Methionine--tRNA ligase (691 aa).

Positions 15 to 25 match the 'HIGH' region motif; it reads PYTNGPIHIGH. 4 residues coordinate Zn(2+): cysteine 147, cysteine 150, cysteine 160, and cysteine 163. The 'KMSKS' region motif lies at 336 to 340; it reads KLSTS. Residue threonine 339 coordinates ATP. A tRNA-binding domain is found at 589 to 691; it reads DFTKMDLRVG…DGVKAGTTIN (103 aa).

This sequence belongs to the class-I aminoacyl-tRNA synthetase family. MetG type 1 subfamily. As to quaternary structure, homodimer. Zn(2+) serves as cofactor.

The protein localises to the cytoplasm. It catalyses the reaction tRNA(Met) + L-methionine + ATP = L-methionyl-tRNA(Met) + AMP + diphosphate. Its function is as follows. Is required not only for elongation of protein synthesis but also for the initiation of all mRNA translation through initiator tRNA(fMet) aminoacylation. This Christiangramia forsetii (strain DSM 17595 / CGMCC 1.15422 / KT0803) (Gramella forsetii) protein is Methionine--tRNA ligase.